A 339-amino-acid polypeptide reads, in one-letter code: Heat-inducible transcription repressor HrcA (339 aa).

It belongs to the HrcA family.

Its function is as follows. Negative regulator of class I heat shock genes (grpE-dnaK-dnaJ and groELS operons). Prevents heat-shock induction of these operons. The sequence is that of Heat-inducible transcription repressor HrcA from Methylobacillus flagellatus (strain ATCC 51484 / DSM 6875 / VKM B-1610 / KT).